The sequence spans 431 residues: Galanin-like G-protein coupled receptor npr-9 (431 aa).

At 1 to 34 the chain is on the extracellular side; that stretch reads MEFENLTKEEMEQLQKIYDDTISFERKIGIIIPT. A glycan (N-linked (GlcNAc...) asparagine) is linked at N5. The chain crosses the membrane as a helical span at residues 35 to 55; it reads IFAVIILVGLVGNALVVIVAF. Residues 56 to 66 are Cytoplasmic-facing; that stretch reads GRQMRNSTNTL. A helical membrane pass occupies residues 67–87; the sequence is IIGLAISDLMFLLLCVPFTAV. Over 88-101 the chain is Extracellular; the sequence is DYAAPTWIFPEWTC. C101 and C182 are oxidised to a cystine. The helical transmembrane segment at 102 to 124 threads the bilayer; sequence SMINFFQHTSAYCSVWTLTLMAL. Residues 125-143 lie on the Cytoplasmic side of the membrane; it reads DRYLAVVYPVESMTLRTPR. Residues 144–164 form a helical membrane-spanning segment; sequence NTVIALCFIYIIIIASQIPVG. At 165-203 the chain is on the extracellular side; that stretch reads RMHGIYVYDFIMEKRSTCAILTIATAEATPTMARTYFMT. A helical membrane pass occupies residues 204 to 224; that stretch reads FNVFGYVLPLGISVVLYGLML. Residues 225–268 are Cytoplasmic-facing; it reads RKLWDMPRPGNSQSVGGRNLTNRDSGSSIRRRPEATAAKRKVTR. The span at 235–252 shows a compositional bias: polar residues; sequence NSQSVGGRNLTNRDSGSS. Positions 235-257 are disordered; sequence NSQSVGGRNLTNRDSGSSIRRRP. Residues 269–289 form a helical membrane-spanning segment; the sequence is LVLCVLITWALCWLPLNVCFF. The Extracellular portion of the chain corresponds to 290–298; the sequence is MSGLAYPEP. The helical transmembrane segment at 299 to 319 threads the bilayer; it reads LVISHGVIMVIVQIASQVLAY. The Cytoplasmic portion of the chain corresponds to 320–431; that stretch reads TNSCLNPILY…RSKSTRSYNL (112 aa). A compositionally biased stretch (polar residues) spans 393-414; sequence SLLKDNSSSATSVQPLRTSIQA. The segment at 393–431 is disordered; the sequence is SLLKDNSSSATSVQPLRTSIQAKKTKNIGRSKSTRSYNL. Positions 415-425 are enriched in basic residues; the sequence is KKTKNIGRSKS.

Belongs to the G-protein coupled receptor 1 family. As to expression, exclusively expressed in the AIB interneuron.

It is found in the cell membrane. Functionally, neuropeptide that controls movement such as roaming, foraging and backwards locomotion or 'reversals' in response to environmental cues such as food availability or volatile odorants such as octanol. Antagonizes AIB interneuron activity to control bacterial colonization and may negatively regulate the expression of immunity-related genes such as pqm-1 and dod-22 in response to infection by P.aeruginosa. The protein is Galanin-like G-protein coupled receptor npr-9 of Caenorhabditis elegans.